A 78-amino-acid polypeptide reads, in one-letter code: MSGLGIMVLTLLLLVFMEASHQDAGEKQATQRDAINVRRRRSLARRTVTEECEEDCEDEEKHCCNTNNGPSCARLCFG.

An N-terminal signal peptide occupies residues 1–19 (MSGLGIMVLTLLLLVFMEA). Residues 20 to 44 (SHQDAGEKQATQRDAINVRRRRSLA) constitute a propeptide that is removed on maturation. Intrachain disulfides connect Cys52-Cys64, Cys56-Cys72, and Cys63-Cys76. Residue Phe77 is modified to Phenylalanine amide.

It belongs to the conotoxin O3 superfamily. As to expression, expressed by the venom duct.

It localises to the secreted. The sequence is that of Conotoxin CaFr179 from Conus caracteristicus (Characteristic cone).